Reading from the N-terminus, the 227-residue chain is Lipoprotein-releasing system ATP-binding protein LolD (227 aa).

In terms of domain architecture, ABC transporter spans Leu-6 to Ala-227. Gly-42–Ser-49 serves as a coordination point for ATP.

It belongs to the ABC transporter superfamily. Lipoprotein translocase (TC 3.A.1.125) family. As to quaternary structure, the complex is composed of two ATP-binding proteins (LolD) and two transmembrane proteins (LolC and LolE).

The protein localises to the cell inner membrane. Functionally, part of the ABC transporter complex LolCDE involved in the translocation of mature outer membrane-directed lipoproteins, from the inner membrane to the periplasmic chaperone, LolA. Responsible for the formation of the LolA-lipoprotein complex in an ATP-dependent manner. This is Lipoprotein-releasing system ATP-binding protein LolD from Haemophilus influenzae (strain 86-028NP).